The primary structure comprises 145 residues: Mannitol-specific phosphotransferase enzyme IIA component (145 aa).

The 144-residue stretch at 2–145 folds into the PTS EIIA type-2 domain; the sequence is ENLTNISIEL…EEITENLAIA (144 aa). H62 functions as the Tele-phosphohistidine intermediate in the catalytic mechanism. A Phosphohistidine; by HPr modification is found at H62.

The protein resides in the cytoplasm. In terms of biological role, the phosphoenolpyruvate-dependent sugar phosphotransferase system (sugar PTS), a major carbohydrate active transport system, catalyzes the phosphorylation of incoming sugar substrates concomitantly with their translocation across the cell membrane. The enzyme II CmtAB PTS system is involved in D-mannitol transport. This is Mannitol-specific phosphotransferase enzyme IIA component from Enterococcus faecalis (strain ATCC 700802 / V583).